The primary structure comprises 120 residues: UPF0102 protein TWT_455 (120 aa).

The protein belongs to the UPF0102 family.

The polypeptide is UPF0102 protein TWT_455 (Tropheryma whipplei (strain Twist) (Whipple's bacillus)).